The primary structure comprises 779 residues: Endonuclease MutS2 (779 aa).

328–335 serves as a coordination point for ATP; sequence GPNTGGKT. The Smr domain occupies 704 to 779; sequence LDLRGKRYEE…GSGATIVTLG (76 aa).

This sequence belongs to the DNA mismatch repair MutS family. MutS2 subfamily. As to quaternary structure, homodimer. Binds to stalled ribosomes, contacting rRNA.

Its function is as follows. Endonuclease that is involved in the suppression of homologous recombination and thus may have a key role in the control of bacterial genetic diversity. In terms of biological role, acts as a ribosome collision sensor, splitting the ribosome into its 2 subunits. Detects stalled/collided 70S ribosomes which it binds and splits by an ATP-hydrolysis driven conformational change. Acts upstream of the ribosome quality control system (RQC), a ribosome-associated complex that mediates the extraction of incompletely synthesized nascent chains from stalled ribosomes and their subsequent degradation. Probably generates substrates for RQC. The polypeptide is Endonuclease MutS2 (Streptococcus agalactiae serotype III (strain NEM316)).